Here is a 219-residue protein sequence, read N- to C-terminus: Cytidylate kinase (219 aa).

15–23 (GPAASGKGT) provides a ligand contact to ATP.

Belongs to the cytidylate kinase family. Type 1 subfamily.

It is found in the cytoplasm. The catalysed reaction is CMP + ATP = CDP + ADP. It carries out the reaction dCMP + ATP = dCDP + ADP. This chain is Cytidylate kinase, found in Brucella melitensis biotype 2 (strain ATCC 23457).